A 447-amino-acid polypeptide reads, in one-letter code: N-succinylarginine dihydrolase (447 aa).

Residues 19-28 (AGLSFGNEAS), Asn-110, and 137-138 (HR) contribute to the substrate site. Glu-174 is an active-site residue. Arg-212 provides a ligand contact to substrate. The active site involves His-248. Substrate-binding residues include Asp-250 and Asn-359. Residue Cys-365 is the Nucleophile of the active site.

This sequence belongs to the succinylarginine dihydrolase family. As to quaternary structure, homodimer.

It catalyses the reaction N(2)-succinyl-L-arginine + 2 H2O + 2 H(+) = N(2)-succinyl-L-ornithine + 2 NH4(+) + CO2. It participates in amino-acid degradation; L-arginine degradation via AST pathway; L-glutamate and succinate from L-arginine: step 2/5. Functionally, catalyzes the hydrolysis of N(2)-succinylarginine into N(2)-succinylornithine, ammonia and CO(2). In Salmonella agona (strain SL483), this protein is N-succinylarginine dihydrolase.